A 193-amino-acid polypeptide reads, in one-letter code: ATP-dependent Clp protease proteolytic subunit 1 (193 aa).

Catalysis depends on S98, which acts as the Nucleophile. Residue H123 is part of the active site.

Belongs to the peptidase S14 family. Fourteen ClpP subunits assemble into 2 heptameric rings which stack back to back to give a disk-like structure with a central cavity, resembling the structure of eukaryotic proteasomes.

The protein resides in the cytoplasm. It catalyses the reaction Hydrolysis of proteins to small peptides in the presence of ATP and magnesium. alpha-casein is the usual test substrate. In the absence of ATP, only oligopeptides shorter than five residues are hydrolyzed (such as succinyl-Leu-Tyr-|-NHMec, and Leu-Tyr-Leu-|-Tyr-Trp, in which cleavage of the -Tyr-|-Leu- and -Tyr-|-Trp bonds also occurs).. Cleaves peptides in various proteins in a process that requires ATP hydrolysis. Has a chymotrypsin-like activity. Plays a major role in the degradation of misfolded proteins. The protein is ATP-dependent Clp protease proteolytic subunit 1 of Bacillus anthracis.